We begin with the raw amino-acid sequence, 450 residues long: Phosphoglucosamine mutase (450 aa).

The active-site Phosphoserine intermediate is the S101. Mg(2+) is bound by residues S101, D242, D244, and D246. S101 is subject to Phosphoserine.

It belongs to the phosphohexose mutase family. Requires Mg(2+) as cofactor. Post-translationally, activated by phosphorylation.

It catalyses the reaction alpha-D-glucosamine 1-phosphate = D-glucosamine 6-phosphate. Catalyzes the conversion of glucosamine-6-phosphate to glucosamine-1-phosphate. In Rhodopseudomonas palustris (strain HaA2), this protein is Phosphoglucosamine mutase.